Reading from the N-terminus, the 475-residue chain is Kynureninase (475 aa).

Residues leucine 141, threonine 142, 169-172 (FPSD), aspartate 254, histidine 257, and tyrosine 279 contribute to the pyridoxal 5'-phosphate site. An N6-(pyridoxal phosphate)lysine modification is found at lysine 280. The pyridoxal 5'-phosphate site is built by tryptophan 319 and asparagine 347.

It belongs to the kynureninase family. As to quaternary structure, homodimer. Requires pyridoxal 5'-phosphate as cofactor.

Its subcellular location is the cytoplasm. It carries out the reaction L-kynurenine + H2O = anthranilate + L-alanine + H(+). The enzyme catalyses 3-hydroxy-L-kynurenine + H2O = 3-hydroxyanthranilate + L-alanine + H(+). It participates in amino-acid degradation; L-kynurenine degradation; L-alanine and anthranilate from L-kynurenine: step 1/1. Its pathway is cofactor biosynthesis; NAD(+) biosynthesis; quinolinate from L-kynurenine: step 2/3. Functionally, catalyzes the cleavage of L-kynurenine (L-Kyn) and L-3-hydroxykynurenine (L-3OHKyn) into anthranilic acid (AA) and 3-hydroxyanthranilic acid (3-OHAA), respectively. The sequence is that of Kynureninase (bna5) from Sclerotinia sclerotiorum (strain ATCC 18683 / 1980 / Ss-1) (White mold).